Here is a 290-residue protein sequence, read N- to C-terminus: Phosphoribulokinase (290 aa).

12–20 contacts ATP; it reads GSSGAGTTS.

Belongs to the phosphoribulokinase family.

It catalyses the reaction D-ribulose 5-phosphate + ATP = D-ribulose 1,5-bisphosphate + ADP + H(+). It functions in the pathway carbohydrate biosynthesis; Calvin cycle. The polypeptide is Phosphoribulokinase (cbbP) (Nitrobacter vulgaris).